A 498-amino-acid polypeptide reads, in one-letter code: Fascin-3 (498 aa).

This sequence belongs to the fascin family. In terms of tissue distribution, expressed in testis.

It is found in the cytoplasm. It localises to the cytoskeleton. Functionally, acts as an actin bundling protein. The polypeptide is Fascin-3 (FSCN3) (Homo sapiens (Human)).